A 95-amino-acid chain; its full sequence is Large ribosomal subunit protein uL23 (95 aa).

This sequence belongs to the universal ribosomal protein uL23 family. In terms of assembly, contacts protein L29, and trigger factor when it is bound to the ribosome. Part of the 50S ribosomal subunit.

In terms of biological role, one of the early assembly proteins it binds 23S rRNA. One of the proteins that surrounds the polypeptide exit tunnel on the outside of the ribosome. Forms the main docking site for trigger factor binding to the ribosome. The sequence is that of Large ribosomal subunit protein uL23 from Geobacillus stearothermophilus (Bacillus stearothermophilus).